A 571-amino-acid polypeptide reads, in one-letter code: Alpha-1D adrenergic receptor (571 aa).

Topologically, residues 1 to 94 are extracellular; it reads MTFRDLLSVN…AVGGLVVSAQ (94 aa). The interval 13–75 is disordered; it reads GSRSDGSAGG…SSAGEPGAAG (63 aa). The segment covering 19 to 34 has biased composition (gly residues); it reads SAGGASAGGSGGGSGG. Positions 35–47 are enriched in low complexity; it reads AAASEGRAVDGVP. Over residues 48 to 57 the composition is skewed to gly residues; that stretch reads GTAGSGGVVG. Residues N64 and N81 are each glycosylated (N-linked (GlcNAc...) asparagine). The helical transmembrane segment at 95–120 threads the bilayer; it reads GVGVGVFLAAFILMAVAGNLLVILSV. The Cytoplasmic portion of the chain corresponds to 121–132; it reads ACNRHLQTVTNY. A helical membrane pass occupies residues 133–158; it reads FIVNLAVADLLLSATVLPFSATMEVL. The Extracellular segment spans residues 159 to 168; the sequence is GFWAFGRAFC. Residues 169 to 191 traverse the membrane as a helical segment; it reads DVWAAVDVLCCTASILSLCTISV. Residues 192 to 212 lie on the Cytoplasmic side of the membrane; it reads DRYVGVRHSLKYPSIMTERKA. The chain crosses the membrane as a helical span at residues 213–237; it reads AAILALLWAVAIVVSVGPLLGWKEP. Topologically, residues 238–250 are extracellular; that stretch reads VPPDERFCGITEE. Residues 251–274 form a helical membrane-spanning segment; that stretch reads AGYAVFSSLCSFYLPMAVIVVMYC. Over 275–348 the chain is Cytoplasmic; the sequence is RVYVVARSTT…KFSREKKAAK (74 aa). The helical transmembrane segment at 349-373 threads the bilayer; it reads TLAIVVGVFVLCWFPFFFVLPLGSL. Over 374–380 the chain is Extracellular; sequence FPQLKPS. A helical membrane pass occupies residues 381-405; sequence EGVFKVIFWLGYFNSCVNPLIYPCS. The Cytoplasmic portion of the chain corresponds to 406 to 571; it reads SREFKRAFLR…DYSHLRETDI (166 aa). A lipid anchor (S-palmitoyl cysteine) is attached at C419. A disordered region spans residues 465-487; sequence LPAPEATDTPSAPEAQAPVVGRR.

The protein belongs to the G-protein coupled receptor 1 family. Adrenergic receptor subfamily. ADRA1D sub-subfamily. Interacts with FLNA (via filamin repeat 21); increases PKA-mediated phosphorylation of FLNA. In terms of processing, palmitoylated. Palmitoylation by ZDHHC21 may increase the expression of the receptor and regulate downstream signaling.

The protein localises to the cell membrane. This alpha-adrenergic receptor mediates its effect through the influx of extracellular calcium. The chain is Alpha-1D adrenergic receptor (ADRA1D) from Sus scrofa (Pig).